Consider the following 360-residue polypeptide: Cell division protein DivIB (360 aa).

A disordered region spans residues 1–54; that stretch reads MTEKDSNVEESVLEVEQASQVELDSEQISPAEKESVLAEEKEFSTDVDIPEMTA. Over 1-139 the chain is Cytoplasmic; it reads MTEKDSNVEE…VDIPSKVVWK (139 aa). The segment covering 17 to 28 has biased composition (polar residues); it reads QASQVELDSEQI. Residues 31–44 show a composition bias toward basic and acidic residues; it reads AEKESVLAEEKEFS. A helical transmembrane segment spans residues 140 to 160; the sequence is AIPVLVTSLLLAALALYFISP. Residues 161–360 lie on the Extracellular side of the membrane; sequence TSKKKQIEVV…MEVGIYRYAS (200 aa). In terms of domain architecture, POTRA spans 162 to 233; sequence SKKKQIEVVG…ATFTIHIKEY (72 aa).

This sequence belongs to the FtsQ/DivIB family. DivIB subfamily.

The protein localises to the cell membrane. Its function is as follows. Cell division protein that may be involved in stabilizing or promoting the assembly of the division complex. This is Cell division protein DivIB from Streptococcus suis (strain GZ1).